Reading from the N-terminus, the 892-residue chain is Alanine--tRNA ligase (892 aa).

Zn(2+)-binding residues include histidine 578, histidine 582, cysteine 681, and histidine 685.

This sequence belongs to the class-II aminoacyl-tRNA synthetase family. It depends on Zn(2+) as a cofactor.

It localises to the cytoplasm. The enzyme catalyses tRNA(Ala) + L-alanine + ATP = L-alanyl-tRNA(Ala) + AMP + diphosphate. In terms of biological role, catalyzes the attachment of alanine to tRNA(Ala) in a two-step reaction: alanine is first activated by ATP to form Ala-AMP and then transferred to the acceptor end of tRNA(Ala). Also edits incorrectly charged Ser-tRNA(Ala) and Gly-tRNA(Ala) via its editing domain. The chain is Alanine--tRNA ligase from Cutibacterium acnes (strain DSM 16379 / KPA171202) (Propionibacterium acnes).